Here is a 149-residue protein sequence, read N- to C-terminus: Small ribosomal subunit protein uS13 (149 aa).

The disordered stretch occupies residues 118–149 (GRRHELGLPVRGQRTKSTFRKGSSVGVRRKKR).

Belongs to the universal ribosomal protein uS13 family. In terms of assembly, part of the 30S ribosomal subunit. Forms a loose heterodimer with protein S19. Forms two bridges to the 50S subunit in the 70S ribosome.

In terms of biological role, located at the top of the head of the 30S subunit, it contacts several helices of the 16S rRNA. In the 70S ribosome it contacts the 23S rRNA (bridge B1a) and protein L5 of the 50S subunit (bridge B1b), connecting the 2 subunits; these bridges are implicated in subunit movement. The polypeptide is Small ribosomal subunit protein uS13 (Methanothermobacter thermautotrophicus (strain ATCC 29096 / DSM 1053 / JCM 10044 / NBRC 100330 / Delta H) (Methanobacterium thermoautotrophicum)).